The sequence spans 179 residues: Large ribosomal subunit protein uL5 (179 aa).

Belongs to the universal ribosomal protein uL5 family. In terms of assembly, part of the 50S ribosomal subunit; part of the 5S rRNA/L5/L18/L25 subcomplex. Contacts the 5S rRNA and the P site tRNA. Forms a bridge to the 30S subunit in the 70S ribosome.

Its function is as follows. This is one of the proteins that bind and probably mediate the attachment of the 5S RNA into the large ribosomal subunit, where it forms part of the central protuberance. In the 70S ribosome it contacts protein S13 of the 30S subunit (bridge B1b), connecting the 2 subunits; this bridge is implicated in subunit movement. Contacts the P site tRNA; the 5S rRNA and some of its associated proteins might help stabilize positioning of ribosome-bound tRNAs. This Vibrio vulnificus (strain CMCP6) protein is Large ribosomal subunit protein uL5.